A 220-amino-acid polypeptide reads, in one-letter code: Vesicle-associated membrane protein 7 (220 aa).

Alanine 2 carries the post-translational modification N-acetylalanine. The Cytoplasmic portion of the chain corresponds to 2-188 (AILFAVVARG…ARAMCMKNLK (187 aa)). Positions 7 to 110 (VVARGTTILA…AMNSEFSSVL (104 aa)) constitute a Longin domain. Residues 125–185 (KVMETQAQVD…RNLARAMCMK (61 aa)) enclose the v-SNARE coiled-coil homology domain. Phosphoserine occurs at positions 167 and 168. A helical; Anchor for type IV membrane protein transmembrane segment spans residues 189–209 (LTIIIIIVSIVFIYIIVSPLC). At 210-220 (GGFTWPSCVKK) the chain is on the vesicular side.

Belongs to the synaptobrevin family. In terms of assembly, component of the SNARE complex composed of STX4, SNAP23 and VAMP7 that binds SYT7 during lysosomal exocytosis. Component of the SNARE complex composed of STX7, STX8, VAMP7 and VTI1B that is required for heterotypic fusion of late endosomes with lysosomes in liver cells. May interact with STX17. Interacts with PICALM. Interacts with RAB21.

Its subcellular location is the cytoplasmic vesicle. The protein localises to the secretory vesicle membrane. The protein resides in the golgi apparatus. It localises to the trans-Golgi network membrane. It is found in the late endosome membrane. Its subcellular location is the lysosome membrane. The protein localises to the endoplasmic reticulum membrane. The protein resides in the phagosome membrane. It localises to the synapse. It is found in the synaptosome. Its function is as follows. Involved in the targeting and/or fusion of transport vesicles to their target membrane during transport of proteins from the early endosome to the lysosome. Required for heterotypic fusion of late endosomes with lysosomes and homotypic lysosomal fusion. Required for calcium regulated lysosomal exocytosis. Involved in the export of chylomicrons from the endoplasmic reticulum to the cis Golgi. Required for exocytosis of mediators during eosinophil and neutrophil degranulation, and target cell killing by natural killer cells. Required for focal exocytosis of late endocytic vesicles during phagosome formation. In Pongo abelii (Sumatran orangutan), this protein is Vesicle-associated membrane protein 7 (VAMP7).